Consider the following 102-residue polypeptide: Urease subunit beta (102 aa).

This sequence belongs to the urease beta subunit family. In terms of assembly, heterotrimer of UreA (gamma), UreB (beta) and UreC (alpha) subunits. Three heterotrimers associate to form the active enzyme.

The protein resides in the cytoplasm. It catalyses the reaction urea + 2 H2O + H(+) = hydrogencarbonate + 2 NH4(+). It participates in nitrogen metabolism; urea degradation; CO(2) and NH(3) from urea (urease route): step 1/1. The chain is Urease subunit beta from Methylibium petroleiphilum (strain ATCC BAA-1232 / LMG 22953 / PM1).